Consider the following 314-residue polypeptide: MGAGDRTVAGMPRIGMGTAVQGPKPDPIRRAVLRAIEIGYRHFDTAAHYETEAPIGEAAAEAVRSGAVASRDDLFITSKLWCSDAHGDRVVPALRHTLRNLQMEYVDLYLVHWPVSMKPGRFKAPFTAEDFVPFDMRAVWEAMEECHRLGLAKAIGVANFSCKKLDTLLSFATIPPTVNQVEVNPVWQQRKLREFCRGKGIQLCAYSPLGAKGTHWGSDAVMDAGVLQDIAASRGKSVAQVCLRWVYEQGDCLIVKSFDEARMRENLDVDGWELTEEERRRIAEIPQRKINLGKRYVSDHGPYKSLEELWDGEI.

The interval Met-1–Gln-21 is disordered. Asp-44 provides a ligand contact to NADP(+). The active-site Proton donor is Tyr-49. His-112 serves as a coordination point for substrate. Residues Ala-158 to Asn-159, Gln-180, Phe-258 to Asn-266, and Glu-273 to Arg-281 each bind NADP(+).

This sequence belongs to the aldo/keto reductase family.

It carries out the reaction 2'-deoxymugineate + NAD(+) = 3''-deamino-3''-oxonicotianamine + NADH + H(+). The enzyme catalyses 2'-deoxymugineate + NADP(+) = 3''-deamino-3''-oxonicotianamine + NADPH + H(+). Its pathway is siderophore biosynthesis. Its function is as follows. Catalyzes the reduction of a 3''-keto intermediate during the biosynthesis of 2'-deoxymugineic acid (DMA) from L-Met. Involved in the formation of phytosiderophores (MAs) belonging to the mugineic acid family and required to acquire iron. The chain is Deoxymugineic acid synthase 1 from Hordeum vulgare (Barley).